Consider the following 161-residue polypeptide: 2-C-methyl-D-erythritol 2,4-cyclodiphosphate synthase (161 aa).

Positions 13 and 15 each coordinate a divalent metal cation. 4-CDP-2-C-methyl-D-erythritol 2-phosphate is bound by residues 13–15 (DAH) and 40–41 (HS). His48 serves as a coordination point for a divalent metal cation. 62 to 64 (DIG) contacts 4-CDP-2-C-methyl-D-erythritol 2-phosphate.

Belongs to the IspF family. In terms of assembly, homotrimer. The cofactor is a divalent metal cation.

It carries out the reaction 4-CDP-2-C-methyl-D-erythritol 2-phosphate = 2-C-methyl-D-erythritol 2,4-cyclic diphosphate + CMP. It participates in isoprenoid biosynthesis; isopentenyl diphosphate biosynthesis via DXP pathway; isopentenyl diphosphate from 1-deoxy-D-xylulose 5-phosphate: step 4/6. In terms of biological role, involved in the biosynthesis of isopentenyl diphosphate (IPP) and dimethylallyl diphosphate (DMAPP), two major building blocks of isoprenoid compounds. Catalyzes the conversion of 4-diphosphocytidyl-2-C-methyl-D-erythritol 2-phosphate (CDP-ME2P) to 2-C-methyl-D-erythritol 2,4-cyclodiphosphate (ME-CPP) with a corresponding release of cytidine 5-monophosphate (CMP). The protein is 2-C-methyl-D-erythritol 2,4-cyclodiphosphate synthase of Deinococcus radiodurans (strain ATCC 13939 / DSM 20539 / JCM 16871 / CCUG 27074 / LMG 4051 / NBRC 15346 / NCIMB 9279 / VKM B-1422 / R1).